We begin with the raw amino-acid sequence, 474 residues long: tRNA-2-methylthio-N(6)-dimethylallyladenosine synthase (474 aa).

An MTTase N-terminal domain is found at 3–120; sequence QKLHIKTWGC…LPEMINQIRG (118 aa). Cys12, Cys49, Cys83, Cys157, Cys161, and Cys164 together coordinate [4Fe-4S] cluster. Positions 143–375 constitute a Radical SAM core domain; that stretch reads RAEGPTAFVS…QERINQQAAQ (233 aa). Residues 378–441 enclose the TRAM domain; the sequence is RRMLGTEQRV…TNSLRGEVVR (64 aa).

It belongs to the methylthiotransferase family. MiaB subfamily. As to quaternary structure, monomer. The cofactor is [4Fe-4S] cluster.

The protein resides in the cytoplasm. It catalyses the reaction N(6)-dimethylallyladenosine(37) in tRNA + (sulfur carrier)-SH + AH2 + 2 S-adenosyl-L-methionine = 2-methylsulfanyl-N(6)-dimethylallyladenosine(37) in tRNA + (sulfur carrier)-H + 5'-deoxyadenosine + L-methionine + A + S-adenosyl-L-homocysteine + 2 H(+). Catalyzes the methylthiolation of N6-(dimethylallyl)adenosine (i(6)A), leading to the formation of 2-methylthio-N6-(dimethylallyl)adenosine (ms(2)i(6)A) at position 37 in tRNAs that read codons beginning with uridine. The protein is tRNA-2-methylthio-N(6)-dimethylallyladenosine synthase of Haemophilus influenzae (strain PittGG).